We begin with the raw amino-acid sequence, 452 residues long: Phosphoglucosamine mutase (452 aa).

The Phosphoserine intermediate role is filled by serine 108. Residues serine 108, aspartate 247, aspartate 249, and aspartate 251 each contribute to the Mg(2+) site. Serine 108 bears the Phosphoserine mark.

Belongs to the phosphohexose mutase family. Requires Mg(2+) as cofactor. Activated by phosphorylation.

It catalyses the reaction alpha-D-glucosamine 1-phosphate = D-glucosamine 6-phosphate. In terms of biological role, catalyzes the conversion of glucosamine-6-phosphate to glucosamine-1-phosphate. The polypeptide is Phosphoglucosamine mutase (Burkholderia pseudomallei (strain 668)).